The sequence spans 206 residues: Large ribosomal subunit protein uL4 (206 aa).

A disordered region spans residues 49–73; the sequence is KTKTISEISGTTKKPFAQKGGGRAR.

Belongs to the universal ribosomal protein uL4 family. Part of the 50S ribosomal subunit.

In terms of biological role, one of the primary rRNA binding proteins, this protein initially binds near the 5'-end of the 23S rRNA. It is important during the early stages of 50S assembly. It makes multiple contacts with different domains of the 23S rRNA in the assembled 50S subunit and ribosome. Forms part of the polypeptide exit tunnel. The sequence is that of Large ribosomal subunit protein uL4 from Paramagnetospirillum magneticum (strain ATCC 700264 / AMB-1) (Magnetospirillum magneticum).